A 149-amino-acid polypeptide reads, in one-letter code: D-aminoacyl-tRNA deacylase (149 aa).

The short motif at 137-138 is the Gly-cisPro motif, important for rejection of L-amino acids element; sequence GP.

It belongs to the DTD family. Homodimer.

The protein localises to the cytoplasm. The enzyme catalyses glycyl-tRNA(Ala) + H2O = tRNA(Ala) + glycine + H(+). It carries out the reaction a D-aminoacyl-tRNA + H2O = a tRNA + a D-alpha-amino acid + H(+). Its function is as follows. An aminoacyl-tRNA editing enzyme that deacylates mischarged D-aminoacyl-tRNAs. Also deacylates mischarged glycyl-tRNA(Ala), protecting cells against glycine mischarging by AlaRS. Acts via tRNA-based rather than protein-based catalysis; rejects L-amino acids rather than detecting D-amino acids in the active site. By recycling D-aminoacyl-tRNA to D-amino acids and free tRNA molecules, this enzyme counteracts the toxicity associated with the formation of D-aminoacyl-tRNA entities in vivo and helps enforce protein L-homochirality. This is D-aminoacyl-tRNA deacylase from Clostridium kluyveri (strain ATCC 8527 / DSM 555 / NBRC 12016 / NCIMB 10680 / K1).